We begin with the raw amino-acid sequence, 536 residues long: Thiamine transport system permease protein ThiP (536 aa).

12 consecutive transmembrane segments (helical) span residues 16-36 (GLCA…ALWL), 58-78 (FSFW…VFLA), 95-115 (LCAM…LSVY), 134-154 (FSPY…LPMA), 199-219 (VAAL…SLGG), 240-260 (PARA…LVLL), 291-311 (DALL…AVVV), 334-354 (SLRI…MLLW), 373-393 (LSGM…FFLL), 404-424 (ADGI…LKVL), 463-483 (AQAL…VALF), and 506-526 (DGAV…TLIE). Positions 56 to 261 (VRFSFWQAFL…VCCLALVLLS (206 aa)) constitute an ABC transmembrane type-1 1 domain. Positions 331–525 (VWTSLRIALA…LLCFTLFTLI (195 aa)) constitute an ABC transmembrane type-1 2 domain.

This sequence belongs to the binding-protein-dependent transport system permease family. In terms of assembly, the complex is composed of two ATP-binding proteins (ThiQ), two transmembrane proteins (ThiP) and a solute-binding protein (ThiB).

It is found in the cell inner membrane. Its function is as follows. Part of the ABC transporter complex ThiBPQ involved in thiamine import. Probably responsible for the translocation of the substrate across the membrane. Is also involved in thiamine pyrophosphate transport. The sequence is that of Thiamine transport system permease protein ThiP from Salmonella typhimurium (strain LT2 / SGSC1412 / ATCC 700720).